Reading from the N-terminus, the 105-residue chain is MFAVIKAGGKQYKVDRNSVIKIEKIDGELGSKVQFDQILMIGEYSKPSFIGTPIVKGAIVTAEITNQLKDNKIIAFKKKRRKNYRRKAGHRQELTELKILDITKQ.

This sequence belongs to the bacterial ribosomal protein bL21 family. In terms of assembly, part of the 50S ribosomal subunit. Contacts protein L20.

Its function is as follows. This protein binds to 23S rRNA in the presence of protein L20. The protein is Large ribosomal subunit protein bL21 of Rickettsia typhi (strain ATCC VR-144 / Wilmington).